Here is a 591-residue protein sequence, read N- to C-terminus: Melatonin-related receptor (591 aa).

Topologically, residues Met1–Phe38 are extracellular. The chain crosses the membrane as a helical span at residues Met39 to Leu59. The Cytoplasmic segment spans residues Ala60 to Asn72. A helical transmembrane segment spans residues Ile73–Met93. Topologically, residues Leu94–Met111 are extracellular. Cys109 and Cys186 form a disulfide bridge. Residues Val112–Ile132 form a helical membrane-spanning segment. The Cytoplasmic segment spans residues Asn133 to Arg151. Residues Asn152–Met172 traverse the membrane as a helical segment. At Tyr173–Phe196 the chain is on the extracellular side. The chain crosses the membrane as a helical span at residues Thr197–Thr217. At Lys218–Met247 the chain is on the cytoplasmic side. A helical membrane pass occupies residues Phe248 to Val268. Residues Ala269–Asn281 lie on the Extracellular side of the membrane. A helical transmembrane segment spans residues Trp282–Tyr302. Residues Gly303–Val591 are Cytoplasmic-facing. Residues Leu378–Lys427 form a disordered region.

Belongs to the G-protein coupled receptor 1 family. In terms of assembly, homodimer, and heterodimer with MTNR1A and MTNR1B. Interacts with KAT5. Interacts with RTN4 isoform A/NOGO-A. Interacts with TGFBR1. Strongly expressed in the brain with highly restricted pattern of expression, confined to a subset of the ependymal cells of the third ventricle and a population of cells in the dorsomedial hypothalamic nucleus.

It is found in the cell membrane. Its subcellular location is the postsynaptic density. G protein-coupled receptor that plays a role in numerous physiological processes including regulation of energy metabolism, neurite outgrowth or cell migration. Promotes self-renewal and neuronal differentiation of neural progenitor cells through activation of the NOTCH and WNT/beta-catenin signaling pathways. Modulates the KAT5-dependent glucocorticoid receptor signaling by modulating KAT5 subcellular compartmentalisation. Also plays a role in the activation TGFBR1 in the absence of TGFBR2 by interfering with FKBP1A binding to TGFBR1, leading to induction of both canonical and non-canonical SMAD signaling pathways resulting in inhibition of proliferation or promotion of migration. This chain is Melatonin-related receptor (Gpr50), found in Mus musculus (Mouse).